The sequence spans 207 residues: Ras-related protein Rab-2A (207 aa).

12–20 (GDTGVGKSC) contacts GTP. An Effector region motif is present at residues 34-42 (HDLTIGVEF). GTP is bound by residues 60-64 (DTAGQ), 118-121 (NKSD), and 148-150 (SAK). The tract at residues 187 to 207 (GAPTSKQDGTDQKPAGGGCCK) is disordered. Residues Cys205 and Cys206 are each lipidated (S-geranylgeranyl cysteine).

This sequence belongs to the small GTPase superfamily. Rab family.

The protein localises to the cell membrane. It catalyses the reaction GTP + H2O = GDP + phosphate + H(+). With respect to regulation, regulated by guanine nucleotide exchange factors (GEFs) which promote the exchange of bound GDP for free GTP, GTPase activating proteins (GAPs) which increase the GTP hydrolysis activity, and GDP dissociation inhibitors which inhibit the dissociation of the nucleotide from the GTPase. Functionally, the small GTPases Rab are key regulators of intracellular membrane trafficking, from the formation of transport vesicles to their fusion with membranes. Rabs cycle between active GTP-bound and inactive GDP-bound states. In their active state, drive transport of vesicular carriers from donor organelles to acceptor organelles to regulate the membrane traffic that maintains organelle identity and morphology. The polypeptide is Ras-related protein Rab-2A (rab2A) (Dictyostelium discoideum (Social amoeba)).